A 293-amino-acid polypeptide reads, in one-letter code: Heterogeneous nuclear ribonucleoprotein C-like 4 (293 aa).

One can recognise an RRM domain in the interval 16–87; sequence SRVFIGNLNT…QVVDINLAAE (72 aa). Disordered stretches follow at residues 140–177 and 208–293; these read VVPS…KLKG and HCKQ…QDDS. Residues 177–208 adopt a coiled-coil conformation; that stretch reads GDDLQAIKQELTQIKQKVDSLLENLEKIEKEH. Basic and acidic residues-rich tracts occupy residues 208 to 222 and 229 to 240; these read HCKQ…KSEE and SKKDKTHVKMES. A compositionally biased stretch (acidic residues) spans 242-263; that stretch reads GGADDSVEEGDLLCDDDNEDQG. The segment covering 269-293 has biased composition (basic and acidic residues); it reads LIKDDEKGAEEGEDDRDRANGQDDS.

The protein belongs to the RRM HNRPC family. RALY subfamily.

It localises to the nucleus. In Homo sapiens (Human), this protein is Heterogeneous nuclear ribonucleoprotein C-like 4.